The primary structure comprises 530 residues: 26S proteasome non-ATPase regulatory subunit 3 (530 aa).

Positions 1–16 (MKQEGSARRRGADKAK) are enriched in basic and acidic residues. The interval 1–65 (MKQEGSARRR…TEHSQRELDT (65 aa)) is disordered. Positions 17 to 30 (PPPGGEQEPPPPAP) are enriched in pro residues. K36 is covalently cross-linked (Glycyl lysine isopeptide (Lys-Gly) (interchain with G-Cter in SUMO1); alternate). K36 is covalently cross-linked (Glycyl lysine isopeptide (Lys-Gly) (interchain with G-Cter in SUMO2); alternate). The PCI domain occupies 282–461 (ARYLYYTGRI…GYVQSKEMID (180 aa)). Residues S414 and S426 each carry the phosphoserine modification. Positions 496 to 530 (SYNKDLESAEERREREQQDLEFAKEMAEDDDDSFP) are disordered. Over residues 497–521 (YNKDLESAEERREREQQDLEFAKEM) the composition is skewed to basic and acidic residues.

It belongs to the proteasome subunit S3 family. In terms of assembly, component of the 19S proteasome regulatory particle complex. The 26S proteasome consists of a 20S core particle (CP) and two 19S regulatory subunits (RP). The regulatory particle is made of a lid composed of 9 subunits including PSMD3, a base containing 6 ATPases and few additional components. Interacts with UBQLN1 (via ubiquitin-like domain). Interacts with ERCC6.

Its function is as follows. Component of the 26S proteasome, a multiprotein complex involved in the ATP-dependent degradation of ubiquitinated proteins. This complex plays a key role in the maintenance of protein homeostasis by removing misfolded or damaged proteins, which could impair cellular functions, and by removing proteins whose functions are no longer required. Therefore, the proteasome participates in numerous cellular processes, including cell cycle progression, apoptosis, or DNA damage repair. In Mus musculus (Mouse), this protein is 26S proteasome non-ATPase regulatory subunit 3 (Psmd3).